The chain runs to 218 residues: Adenylate kinase (218 aa).

Position 10–15 (10–15 (GAGKGT)) interacts with ATP. The tract at residues 30 to 59 (STGDMLRAAVKAGTPLGIEAKKVMDSGGLV) is NMP. AMP-binding positions include Thr31, Arg36, 57–59 (GLV), 85–88 (GFPR), and Gln92. An LID region spans residues 122 to 159 (GRRSHSASGRTYHVKYNPPKVEGLDDVTGEPLIQREDD). Residues Arg123 and 132 to 133 (TY) each bind ATP. Residues Arg156 and Arg167 each contribute to the AMP site. Gly203 is a binding site for ATP.

Belongs to the adenylate kinase family. In terms of assembly, monomer.

The protein resides in the cytoplasm. It carries out the reaction AMP + ATP = 2 ADP. It participates in purine metabolism; AMP biosynthesis via salvage pathway; AMP from ADP: step 1/1. In terms of biological role, catalyzes the reversible transfer of the terminal phosphate group between ATP and AMP. Plays an important role in cellular energy homeostasis and in adenine nucleotide metabolism. The chain is Adenylate kinase from Polaromonas naphthalenivorans (strain CJ2).